Consider the following 847-residue polypeptide: Leucine--tRNA ligase (847 aa).

The 'HIGH' region motif lies at 41 to 51 (PYPSGRIHMGH). A 'KMSKS' region motif is present at residues 619–623 (KMSKS). Lys622 contacts ATP.

Belongs to the class-I aminoacyl-tRNA synthetase family.

It is found in the cytoplasm. It carries out the reaction tRNA(Leu) + L-leucine + ATP = L-leucyl-tRNA(Leu) + AMP + diphosphate. The sequence is that of Leucine--tRNA ligase from Cereibacter sphaeroides (strain KD131 / KCTC 12085) (Rhodobacter sphaeroides).